A 338-amino-acid chain; its full sequence is Delta(9)-fatty-acid desaturase fat-7 (338 aa).

Helical transmembrane passes span 51–71 (VALF…LVFH), 76–96 (TAVF…AGAH), 194–214 (YFPL…VYFW), and 218–238 (AFIA…HATW).

The protein belongs to the fatty acid desaturase type 1 family. As to expression, expressed in the intestine in adult worms and in all four larval stages.

It is found in the membrane. The enzyme catalyses octadecanoyl-CoA + 2 Fe(II)-[cytochrome b5] + O2 + 2 H(+) = (9Z)-octadecenoyl-CoA + 2 Fe(III)-[cytochrome b5] + 2 H2O. It catalyses the reaction hexadecanoyl-CoA + 2 Fe(II)-[cytochrome b5] + O2 + 2 H(+) = (9Z)-hexadecenoyl-CoA + 2 Fe(III)-[cytochrome b5] + 2 H2O. It carries out the reaction heptadecanoyl-CoA + 2 Fe(II)-[cytochrome b5] + O2 + 2 H(+) = (9Z)-heptadecenoyl-CoA + 2 Fe(III)-[cytochrome b5] + 2 H2O. The catalysed reaction is (11E)-octadecenoyl-CoA + 2 Fe(II)-[cytochrome b5] + O2 + 2 H(+) = (9Z,11E)-octadecadienoyl-CoA + 2 Fe(III)-[cytochrome b5] + 2 H2O. Its pathway is lipid metabolism; monounsaturated fatty acid biosynthesis. The protein operates within lipid metabolism; fatty acid metabolism. Its function is as follows. Delta(9)-fatty acid desaturase that acts preferentially on stearoyl-CoA (octadecanoyl-CoA) producing the monounsaturated oleoyl-CoA ((9Z)-octadecenoyl-CoA), one of the most abundant monounsaturated fatty acid in Caenorhabditis elegans phospholipids and triacylglycerols. Also acts on palmitoyl-CoA (hexadecanoyl-CoA), heptadecanoyl-CoA and (11E)-octadecenoyl-CoA (trans-vaccenoyl-CoA), the monounsaturated fatty acids (MUFAs) produced are further used by several other desaturases and elongases as substrates to synthesize polyunsaturated fatty acids (PUFAs) endogenously (PUFAs are essential for membrane structure and many cellular and physiological processes). Unlike plants, Caenorhabditis elegans desaturases seem to use fatty acyl-CoAs as substrates. Partially inhibits expression of genes involved in beta-oxidation, such as ech-1 and acs-2, perhaps signaling via the actions of one of its fatty acid products. May form part of a negative feedback loop with the transcription factor nhr-49 to limit beta-oxidation, in which nhr-49 stimulates expression of fat-7 and acs-2, and in turn fat-7 indirectly inhibits acs-2 and other genes also involved in beta-oxidation. This is Delta(9)-fatty-acid desaturase fat-7 (fat-7) from Caenorhabditis elegans.